The primary structure comprises 149 residues: Oligosaccharyltransferase complex subunit OSTC (149 aa).

Topologically, residues 1-32 (MESLYRVPFLVLECPNLKLKKPPWVHMPSAMT) are cytoplasmic. Residues 33–53 (VYALVVVSYFLITGGIIYDVI) traverse the membrane as a helical segment. The Extracellular segment spans residues 54 to 83 (VEPPSVGSVTDEHGHQRPVAFLAYRVNGQY). A helical transmembrane segment spans residues 84-104 (IMEGLASSFLFTMGGLGFIIL). Topologically, residues 105–117 (DRSNAPNIPKLNR) are cytoplasmic. A helical membrane pass occupies residues 118–138 (FLLLFIGFVCVLLSFFMARVF). At 139–149 (MRMKLPGYLMG) the chain is on the extracellular side.

It belongs to the OSTC family. As to quaternary structure, component of STT3A-containing oligosaccharyl transferase (OST-A) complex. STT3A-containing complex assembly occurs through the formation of 3 subcomplexes. Subcomplex 1 contains RPN1 and TMEM258, subcomplex 2 contains the STT3A-specific subunits STT3A, DC2/OSTC, and KCP2 as well as the core subunit OST4, and subcomplex 3 contains RPN2, DAD1, and OST48. The OST-A complex can form stable complexes with the Sec61 complex or with both the Sec61 and TRAP complexes. Interacts with PSEN1 and NCSTN; indicative for an association with the gamma-secretase complex.

It localises to the endoplasmic reticulum. Its subcellular location is the membrane. It functions in the pathway protein modification; protein glycosylation. In terms of biological role, subunit of STT3A-containing oligosaccharyl transferase (OST-A) complex that catalyzes the initial transfer of a defined glycan (Glc(3)Man(9)GlcNAc(2) in eukaryotes) from the lipid carrier dolichol-pyrophosphate to an asparagine residue within an Asn-X-Ser/Thr consensus motif in nascent polypeptide chains, the first step in protein N-glycosylation. N-glycosylation occurs cotranslationally and the complex associates with the Sec61 complex at the channel-forming translocon complex that mediates protein translocation across the endoplasmic reticulum (ER). Within the OST-A complex, acts as an adapter that anchors the OST-A complex to the Sec61 complex. May be involved in N-glycosylation of APP (amyloid-beta precursor protein). Can modulate gamma-secretase cleavage of APP by enhancing endoprotelysis of PSEN1. The chain is Oligosaccharyltransferase complex subunit OSTC from Bos taurus (Bovine).